Here is an 87-residue protein sequence, read N- to C-terminus: Ribonuclease P protein component 1 (87 aa).

This sequence belongs to the eukaryotic/archaeal RNase P protein component 1 family. As to quaternary structure, consists of a catalytic RNA component and at least 4-5 protein subunits.

It localises to the cytoplasm. The enzyme catalyses Endonucleolytic cleavage of RNA, removing 5'-extranucleotides from tRNA precursor.. Its function is as follows. Part of ribonuclease P, a protein complex that generates mature tRNA molecules by cleaving their 5'-ends. This is Ribonuclease P protein component 1 from Thermoplasma acidophilum (strain ATCC 25905 / DSM 1728 / JCM 9062 / NBRC 15155 / AMRC-C165).